The sequence spans 220 residues: ATP-dependent Clp protease proteolytic subunit 1 (220 aa).

Residue Ser-118 is the Nucleophile of the active site. The active site involves His-143.

The protein belongs to the peptidase S14 family. As to quaternary structure, fourteen ClpP subunits assemble into 2 heptameric rings which stack back to back to give a disk-like structure with a central cavity, resembling the structure of eukaryotic proteasomes.

Its subcellular location is the cytoplasm. It carries out the reaction Hydrolysis of proteins to small peptides in the presence of ATP and magnesium. alpha-casein is the usual test substrate. In the absence of ATP, only oligopeptides shorter than five residues are hydrolyzed (such as succinyl-Leu-Tyr-|-NHMec, and Leu-Tyr-Leu-|-Tyr-Trp, in which cleavage of the -Tyr-|-Leu- and -Tyr-|-Trp bonds also occurs).. In terms of biological role, cleaves peptides in various proteins in a process that requires ATP hydrolysis. Has a chymotrypsin-like activity. Plays a major role in the degradation of misfolded proteins. The polypeptide is ATP-dependent Clp protease proteolytic subunit 1 (Rhodococcus jostii (strain RHA1)).